Here is a 351-residue protein sequence, read N- to C-terminus: C-X-C chemokine receptor type 1 (351 aa).

At 1-46 (MSNATDPQMGDDDYDLNFTGMPPTDEDYSPCRLETQSLNKYVVIVT) the chain is on the extracellular side. N-linked (GlcNAc...) asparagine glycans are attached at residues Asn3 and Asn17. A helical membrane pass occupies residues 47 to 67 (YALVFLLSLLGNSLVMLVILY). Residues 68–76 (RRVGRSVTD) lie on the Cytoplasmic side of the membrane. Residues 77-97 (VYLLNLAMADLLFALTLPIWA) traverse the membrane as a helical segment. Residues 98-112 (ASKVNGWIFGTFLCK) lie on the Extracellular side of the membrane. The cysteines at positions 111 and 188 are disulfide-linked. A helical transmembrane segment spans residues 113–133 (VVSLLKEVNFYSGILLLACIS). Over 134 to 154 (VDRYLAIVHATRTLIQKRHSV) the chain is Cytoplasmic. Residues 155-175 (KFVCLSCWGLSVILSLPFFLF) form a helical membrane-spanning segment. Topologically, residues 176-204 (RQAYHPNNSTPVCYEVLGNDTAKWRMVLR) are extracellular. 2 N-linked (GlcNAc...) asparagine glycosylation sites follow: Asn182 and Asn194. Residues 205–225 (ILPHTFGFTLPLLIMLFCYGF) form a helical membrane-spanning segment. Topologically, residues 226-243 (TLHTLFKAHIGQKHRAMR) are cytoplasmic. Residues 244–264 (VIFAVVLIFLLCWLPYNLVLL) form a helical membrane-spanning segment. Residues 265–289 (ADTLMRTHLIKESCERRNDIGRALD) are Extracellular-facing. The helical transmembrane segment at 290–310 (ATEILGFLHSCLNPIIYAFIG) threads the bilayer. The Cytoplasmic segment spans residues 311–351 (QNFRHGFLKILATHGLVSKEFLARHHVTSYTSSSVNVSSNL).

It belongs to the G-protein coupled receptor 1 family. Interacts with IL8. Interacts with GNAI2.

It localises to the cell membrane. In terms of biological role, receptor to interleukin-8, which is a powerful neutrophils chemotactic factor. Binding of IL-8 to the receptor causes activation of neutrophils. This response is mediated via a G-protein that activates a phosphatidylinositol-calcium second messenger system. This chain is C-X-C chemokine receptor type 1 (CXCR1), found in Macaca mulatta (Rhesus macaque).